The following is a 96-amino-acid chain: SAGA complex subunit SUS1 (96 aa).

Lys68 participates in a covalent cross-link: Glycyl lysine isopeptide (Lys-Gly) (interchain with G-Cter in ubiquitin).

It belongs to the ENY2 family. Component of the 1.8 MDa SAGA (Spt-Ada-Gcn5 acetyltransferase) complex, which is composed of 19 subunits TRA1, SPT7, TAF5, NGG1/ADA3, SGF73, SPT20/ADA5, SPT8, TAF12, TAF6, HFI1/ADA1, UBP8, GCN5, ADA2, SPT3, SGF29, TAF10, TAF9, SGF11 and SUS1. The SAGA complex is composed of 4 modules, namely the HAT (histone acetyltransferase) module (GCN5, ADA2, NGG1/ADA3 and SGF29), the DUB (deubiquitinating) module (UBP8, SGF11, SGF73 and SUS1), the core or TAF (TBP-associated factor) module (TAF5, TAF6, TAF9, TAF10 and TAF12), and the Tra1 or SPT (Suppressor of Ty) module (TRA1, HFI1/ADA1, SPT3, SPT7, SPT8 and SPT20/ADA5). The Tra1/SPT module binds activators, the core module recruits TBP (TATA-binding protein), the HAT module contains the histone H3 acetyltransferase GCN5, and the DUB module comprises the histone H2B deubiquitinase UBP8. Also identified in an altered form of SAGA, named SALSA (SAGA altered, Spt8 absent) or SLIK (SAGA-like) complex, which contains a C-terminal truncated form of SPT7 and is missing SPT8. However, it has been shown that the SAGA and SAGA-like SALSA/SLIK transcriptional coactivators are structurally and biochemically equivalent. Component of the nuclear pore complex (NPC)-associated TREX-2 complex (transcription and export complex 2), composed of at least SUS1, SAC3, THP1, SEM1, and CDC31. TREX-2 contains 2 SUS1 chains. The TREX-2 complex interacts with the mRNA export factors MEX67, MTR2 and SUB2, and the nucleoporin NUP1. Interacts directly with THP1, SAC3. Interacts directly with SGF11 and UBP8. Interacts with YRA1, MEX67 and with the RNA polymerase II.

Its subcellular location is the nucleus. The protein resides in the nucleoplasm. The protein localises to the cytoplasm. It localises to the P-body. Functionally, involved in mRNA export coupled transcription activation by association with both the TREX-2 and the SAGA complexes. SAGA acts as a general cofactor required for essentially all RNA polymerase II transcription. At the promoters, SAGA is required for transcription pre-initiation complex (PIC) recruitment. It influences RNA polymerase II transcriptional activity through different activities such as TBP interaction (via core/TAF module) and promoter selectivity, interaction with transcription activators (via Tra1/SPT module), and chromatin modification through histone acetylation (via HAT module) and deubiquitination (via DUB module). SAGA preferentially acetylates histones H3 (to form H3K9ac, H3K14ac, H3K18ac and H3K23ac) and H2B and deubiquitinates histone H2B. SAGA interacts with DNA via upstream activating sequences (UASs). Also identified in a modified version of SAGA named SALSA or SLIK. The cleavage of SPT7 and the absence of the SPT8 subunit in SLIK neither drive any major conformational differences in its structure compared with SAGA, nor significantly affect HAT, DUB, or DNA-binding activities. Within the SAGA complex, participates in a subcomplex with SGF11, SGF73 and UBP8 required for deubiquitination of H2B and for the maintenance of steady-state H3 methylation levels. The TREX-2 complex functions in docking export-competent ribonucleoprotein particles (mRNPs) to the nuclear entrance of the nuclear pore complex (nuclear basket), by association with components of the nuclear mRNA export machinery (MEX67-MTR2 and SUB2) in the nucleoplasm and the nucleoporin NUP1 at the nuclear basket. TREX-2 participates in mRNA export and accurate chromatin positioning in the nucleus by tethering genes to the nuclear periphery. SUS1 also has a role in mRNP biogenesis and maintenance of genome integrity through preventing RNA-mediated genome instability. Has a role in response to DNA damage induced by methyl methane sulfonate (MMS) and replication arrest induced by hydroxyurea. May also be involved in cytoplasmic mRNA decay by interaction with components of P-bodies. The chain is SAGA complex subunit SUS1 from Saccharomyces cerevisiae (strain ATCC 204508 / S288c) (Baker's yeast).